The primary structure comprises 109 residues: Mannose-specific lectin (109 aa).

In terms of domain architecture, Bulb-type lectin spans 1–109; the sequence is DNILYSSEVL…PPIWATGTGR (109 aa). A disulfide bridge links Cys29 with Cys52. Residues 79-82 constitute a propeptide that is removed on maturation; sequence TGTN.

In terms of assembly, homotrimer or homotetramer.

It is found in the secreted. Mannose-specific lectin. Shows agglutinating activity toward rabbit erythrocytes and mitogenic activity towards mouse lymphocytes. In Aloe arborescens (Kidachi aloe), this protein is Mannose-specific lectin.